A 618-amino-acid polypeptide reads, in one-letter code: Very-long-chain aldehyde decarbonylase GL1-3 (618 aa).

The next 7 membrane-spanning stretches (helical) occupy residues 9–29 (LSSWPWAFLGSYKYLLYGPVV), 46–66 (TSWCLHLILLLALRSLTMLFF), 91–111 (MVIMQTLIAAVLVTSRVFPAT), 121–141 (GWAIAVVLHVAVSEPAFYWAH), 174–194 (LESLILTLVAWAPLAGAFMAG), 289–309 (DFVFLVHVVDVVSSMHVPFAF), and 315–335 (LPFATHLVLLPLWPIAFGFML). The 141-residue stretch at 127–267 (VLHVAVSEPA…MPLFDALGGT (141 aa)) folds into the Fatty acid hydroxylase domain.

It belongs to the sterol desaturase family. Homodimer. Expressed in germinating seeds and stamens.

Its subcellular location is the endoplasmic reticulum membrane. It catalyses the reaction a long-chain fatty aldehyde + 2 NADPH + O2 + H(+) = a long-chain alkane + formate + 2 NADP(+) + H2O. Its function is as follows. Aldehyde decarbonylase involved in the conversion of aldehydes to alkanes. Core component of a very-long-chain alkane synthesis complex. In Oryza sativa subsp. japonica (Rice), this protein is Very-long-chain aldehyde decarbonylase GL1-3.